A 227-amino-acid polypeptide reads, in one-letter code: KH domain-containing protein MJ0443 (227 aa).

2 KH domains span residues 14-77 and 106-163; these read KSIE…RDIV and DYAS…KEAV.

This is KH domain-containing protein MJ0443 from Methanocaldococcus jannaschii (strain ATCC 43067 / DSM 2661 / JAL-1 / JCM 10045 / NBRC 100440) (Methanococcus jannaschii).